The chain runs to 274 residues: Penicillin-insensitive murein endopeptidase (274 aa).

The N-terminal stretch at 1–19 (MKNTVIALLALLASAGSLA) is a signal peptide. Intrachain disulfides connect cysteine 44-cysteine 265, cysteine 187-cysteine 235, and cysteine 216-cysteine 223. 6 residues coordinate Zn(2+): histidine 110, histidine 113, aspartate 120, aspartate 147, histidine 150, and histidine 211. The disordered stretch occupies residues 224–263 (EDQAPPPPGDGCGAELQSWFEPPKPGSTPPVKKTPPPLPP). A compositionally biased stretch (pro residues) spans 245–263 (PPKPGSTPPVKKTPPPLPP).

This sequence belongs to the peptidase M74 family. In terms of assembly, dimer. Zn(2+) serves as cofactor.

Its subcellular location is the periplasm. In terms of biological role, murein endopeptidase that cleaves the D-alanyl-meso-2,6-diamino-pimelyl amide bond that connects peptidoglycan strands. Likely plays a role in the removal of murein from the sacculus. The sequence is that of Penicillin-insensitive murein endopeptidase from Klebsiella pneumoniae (strain 342).